A 624-amino-acid chain; its full sequence is Penicillin-binding protein 4 (624 aa).

An N-terminal signal peptide occupies residues 1–21 (MTMLRKIIGWILLLCIIPLFA). The active-site Proton donor; for transglycosylase activity is Glu-96. The active-site Acyl-ester intermediate; for transpeptidase activity is Ser-388.

The protein in the N-terminal section; belongs to the glycosyltransferase 51 family. In the C-terminal section; belongs to the transpeptidase family. Post-translationally, the N-terminus is blocked.

The protein localises to the cell membrane. The catalysed reaction is [GlcNAc-(1-&gt;4)-Mur2Ac(oyl-L-Ala-gamma-D-Glu-L-Lys-D-Ala-D-Ala)](n)-di-trans,octa-cis-undecaprenyl diphosphate + beta-D-GlcNAc-(1-&gt;4)-Mur2Ac(oyl-L-Ala-gamma-D-Glu-L-Lys-D-Ala-D-Ala)-di-trans,octa-cis-undecaprenyl diphosphate = [GlcNAc-(1-&gt;4)-Mur2Ac(oyl-L-Ala-gamma-D-Glu-L-Lys-D-Ala-D-Ala)](n+1)-di-trans,octa-cis-undecaprenyl diphosphate + di-trans,octa-cis-undecaprenyl diphosphate + H(+). The enzyme catalyses Preferential cleavage: (Ac)2-L-Lys-D-Ala-|-D-Ala. Also transpeptidation of peptidyl-alanyl moieties that are N-acyl substituents of D-alanine.. Cell wall formation. Synthesis of cross-linked peptidoglycan from the lipid intermediates. The enzyme has a penicillin-insensitive transglycosylase N-terminal domain (formation of linear glycan strands) and a penicillin-sensitive transpeptidase C-terminal domain (cross-linking of the peptide subunits). Has a partially redundant function with PBP-2A (pbpA) during spore outgrowth. This chain is Penicillin-binding protein 4, found in Bacillus subtilis (strain 168).